The sequence spans 392 residues: 8-amino-7-oxononanoate synthase (392 aa).

R18 provides a ligand contact to substrate. Residue 105-106 (GY) coordinates pyridoxal 5'-phosphate. Residue H130 coordinates substrate. Residues S177, H205, and T234 each contribute to the pyridoxal 5'-phosphate site. K237 is modified (N6-(pyridoxal phosphate)lysine). Residue T351 coordinates substrate.

It belongs to the class-II pyridoxal-phosphate-dependent aminotransferase family. BioF subfamily. As to quaternary structure, homodimer. It depends on pyridoxal 5'-phosphate as a cofactor.

It catalyses the reaction 6-carboxyhexanoyl-[ACP] + L-alanine + H(+) = (8S)-8-amino-7-oxononanoate + holo-[ACP] + CO2. It participates in cofactor biosynthesis; biotin biosynthesis. Catalyzes the decarboxylative condensation of pimeloyl-[acyl-carrier protein] and L-alanine to produce 8-amino-7-oxononanoate (AON), [acyl-carrier protein], and carbon dioxide. The polypeptide is 8-amino-7-oxononanoate synthase (Thioalkalivibrio sulfidiphilus (strain HL-EbGR7)).